The chain runs to 533 residues: Capsid protein VP1 (533 aa).

Positions 333-353 (TIDLQQNPVPQTSSSTTDSPQ) are disordered.

This sequence belongs to the microviridae F protein family.

The protein resides in the virion. Its subcellular location is the host cytoplasm. Its function is as follows. Assembles to form an icosahedral capsid with a T=1 symmetry. The polypeptide is Capsid protein VP1 (Bdellovibrio bacteriovorus (Bacteriophage phiMH2K)).